A 349-amino-acid polypeptide reads, in one-letter code: Sterol-4-alpha-carboxylate 3-dehydrogenase ERG26, decarboxylating (349 aa).

Residues 11–17 (GGSGFLG), 62–63 (DL), and 84–86 (CAS) contribute to the NADP(+) site. 2 residues coordinate substrate: Ser-124 and Tyr-151. Residues Tyr-151, Lys-155, and 179 to 182 (PAGI) contribute to the NADP(+) site. The active-site Proton donor is Lys-155.

Belongs to the 3-beta-HSD family. As to quaternary structure, heterotetramer of ERG25, ERG26, ERG27 and ERG28. ERG28 acts as a scaffold to tether ERG27 and other 4,4-demethylation-related enzymes, forming a demethylation enzyme complex, in the endoplasmic reticulum.

The protein resides in the endoplasmic reticulum membrane. It carries out the reaction 4beta-methylzymosterol-4alpha-carboxylate + NADP(+) = 3-dehydro-4-methylzymosterol + CO2 + NADPH. Its pathway is steroid biosynthesis; zymosterol biosynthesis; zymosterol from lanosterol: step 4/6. Its activity is regulated as follows. Inhibited by FR171456, a natural product with broad antifungal activity. In terms of biological role, sterol-4-alpha-carboxylate 3-dehydrogenase; part of the third module of ergosterol biosynthesis pathway that includes the late steps of the pathway. ERG26 is a catalytic component of the C-4 demethylation complex that catalyzes the oxidative decarboxylation that results in a reduction of the 3-beta-hydroxy group at the C-3 carbon to an oxo group. The third module or late pathway involves the ergosterol synthesis itself through consecutive reactions that mainly occur in the endoplasmic reticulum (ER) membrane. Firstly, the squalene synthase ERG9 catalyzes the condensation of 2 farnesyl pyrophosphate moieties to form squalene, which is the precursor of all steroids. Squalene synthase is crucial for balancing the incorporation of farnesyl diphosphate (FPP) into sterol and nonsterol isoprene synthesis. Secondly, the squalene epoxidase ERG1 catalyzes the stereospecific oxidation of squalene to (S)-2,3-epoxysqualene, which is considered to be a rate-limiting enzyme in steroid biosynthesis. Then, the lanosterol synthase ERG7 catalyzes the cyclization of (S)-2,3 oxidosqualene to lanosterol, a reaction that forms the sterol core. In the next steps, lanosterol is transformed to zymosterol through a complex process involving various demethylation, reduction and desaturation reactions. The lanosterol 14-alpha-demethylase ERG11 (also known as CYP51) catalyzes C14-demethylation of lanosterol to produce 4,4'-dimethyl cholesta-8,14,24-triene-3-beta-ol, which is critical for ergosterol biosynthesis. The C-14 reductase ERG24 reduces the C14=C15 double bond of 4,4-dimethyl-cholesta-8,14,24-trienol to produce 4,4-dimethyl-cholesta-8,24-dienol. 4,4-dimethyl-cholesta-8,24-dienol is substrate of the C-4 demethylation complex ERG25-ERG26-ERG27 in which ERG25 catalyzes the three-step monooxygenation required for the demethylation of 4,4-dimethyl and 4alpha-methylsterols, ERG26 catalyzes the oxidative decarboxylation that results in a reduction of the 3-beta-hydroxy group at the C-3 carbon to an oxo group, and ERG27 is responsible for the reduction of the keto group on the C-3. ERG28 has a role as a scaffold to help anchor ERG25, ERG26 and ERG27 to the endoplasmic reticulum and ERG29 regulates the activity of the iron-containing C4-methylsterol oxidase ERG25. Then, the sterol 24-C-methyltransferase ERG6 catalyzes the methyl transfer from S-adenosyl-methionine to the C-24 of zymosterol to form fecosterol. The C-8 sterol isomerase ERG2 catalyzes the reaction which results in unsaturation at C-7 in the B ring of sterols and thus converts fecosterol to episterol. The sterol-C5-desaturase ERG3 then catalyzes the introduction of a C-5 double bond in the B ring to produce 5-dehydroepisterol. The C-22 sterol desaturase ERG5 further converts 5-dehydroepisterol into ergosta-5,7,22,24(28)-tetraen-3beta-ol by forming the C-22(23) double bond in the sterol side chain. Finally, ergosta-5,7,22,24(28)-tetraen-3beta-ol is substrate of the C-24(28) sterol reductase ERG4 to produce ergosterol. This is Sterol-4-alpha-carboxylate 3-dehydrogenase ERG26, decarboxylating from Saccharomyces cerevisiae (strain ATCC 204508 / S288c) (Baker's yeast).